The primary structure comprises 926 residues: Alpha-aminoadipic semialdehyde synthase, mitochondrial (926 aa).

The transit peptide at 1–27 (MLRAQRLRLARLRACVSRGLHHKPVMA) directs the protein to the mitochondrion. The lysine-ketoglutarate reductase stretch occupies residues 28–455 (LRREDVNAWE…DAVITSNGLL (428 aa)). 3 positions are modified to N6-acetyllysine: Lys-48, Lys-52, and Lys-56. The residue at position 93 (Lys-93) is an N6-acetyllysine; alternate. Position 93 is an N6-succinyllysine; alternate (Lys-93). An N6-acetyllysine modification is found at Lys-128. The residue at position 138 (Lys-138) is an N6-acetyllysine; alternate. N6-succinyllysine; alternate is present on Lys-138. Lys-274 is subject to N6-succinyllysine. Residue Lys-286 is modified to N6-acetyllysine; alternate. Lys-286 carries the post-translational modification N6-succinyllysine; alternate. Lys-333 bears the N6-succinyllysine mark. Lys-458 is subject to N6-acetyllysine; alternate. Lys-458 is modified (N6-succinyllysine; alternate). The saccharopine dehydrogenase stretch occupies residues 477–926 (MSTKKKVLVL…VFNTQSTIKL (450 aa)). Residues Ser-488, Asp-512, and Gln-516 each contribute to the NAD(+) site. An N6-acetyllysine; alternate mark is found at Lys-523 and Lys-535. An N6-succinyllysine; alternate mark is found at Lys-523 and Lys-535. NAD(+) contacts are provided by Leu-554, Ala-576, and Ser-577. 577-578 (SY) is a binding site for L-saccharopine. At Lys-584 the chain carries N6-acetyllysine; alternate. Position 584 is an N6-succinyllysine; alternate (Lys-584). Positions 603, 604, and 605 each coordinate NAD(+). Residue Asp-604 participates in L-saccharopine binding. Arg-703 serves as a coordination point for L-saccharopine. Lys-707 carries the N6-acetyllysine modification. 724 to 726 (TLR) lines the L-saccharopine pocket. Lys-732 is subject to N6-succinyllysine. Lys-739 is modified (N6-acetyllysine). Lys-761 bears the N6-acetyllysine; alternate mark. The residue at position 761 (Lys-761) is an N6-succinyllysine; alternate. N6-acetyllysine occurs at positions 778 and 780.

In the N-terminal section; belongs to the AlaDH/PNT family. It in the C-terminal section; belongs to the saccharopine dehydrogenase family. Homotetramer.

Its subcellular location is the mitochondrion. The enzyme catalyses L-saccharopine + NADP(+) + H2O = L-lysine + 2-oxoglutarate + NADPH + H(+). It catalyses the reaction L-saccharopine + NAD(+) + H2O = (S)-2-amino-6-oxohexanoate + L-glutamate + NADH + H(+). Its pathway is amino-acid degradation; L-lysine degradation via saccharopine pathway; glutaryl-CoA from L-lysine: step 1/6. It participates in amino-acid degradation; L-lysine degradation via saccharopine pathway; glutaryl-CoA from L-lysine: step 2/6. Functionally, bifunctional enzyme that catalyzes the first two steps in lysine degradation. The protein is Alpha-aminoadipic semialdehyde synthase, mitochondrial of Rattus norvegicus (Rat).